The primary structure comprises 87 residues: UPF0213 protein SYNAS_10430 (87 aa).

The GIY-YIG domain occupies 2-78 (SKNYVYILEC…KKMSRAEKLQ (77 aa)).

It belongs to the UPF0213 family.

In Syntrophus aciditrophicus (strain SB), this protein is UPF0213 protein SYNAS_10430.